We begin with the raw amino-acid sequence, 477 residues long: Ribulose bisphosphate carboxylase large chain (477 aa).

The propeptide occupies 1–2 (MS). At Pro-3 the chain carries N-acetylproline. Position 14 is an N6,N6,N6-trimethyllysine (Lys-14). Substrate is bound by residues Asn-123 and Thr-173. The active-site Proton acceptor is Lys-175. A substrate-binding site is contributed by Lys-177. Lys-201, Asp-203, and Glu-204 together coordinate Mg(2+). Residue Lys-201 is modified to N6-carboxylysine. The active-site Proton acceptor is His-294. The substrate site is built by Arg-295, His-327, and Ser-379.

The protein belongs to the RuBisCO large chain family. Type I subfamily. Heterohexadecamer of 8 large chains and 8 small chains; disulfide-linked. The disulfide link is formed within the large subunit homodimers. Requires Mg(2+) as cofactor. Post-translationally, the disulfide bond which can form in the large chain dimeric partners within the hexadecamer appears to be associated with oxidative stress and protein turnover.

Its subcellular location is the plastid. It is found in the chloroplast. The catalysed reaction is 2 (2R)-3-phosphoglycerate + 2 H(+) = D-ribulose 1,5-bisphosphate + CO2 + H2O. It carries out the reaction D-ribulose 1,5-bisphosphate + O2 = 2-phosphoglycolate + (2R)-3-phosphoglycerate + 2 H(+). In terms of biological role, ruBisCO catalyzes two reactions: the carboxylation of D-ribulose 1,5-bisphosphate, the primary event in carbon dioxide fixation, as well as the oxidative fragmentation of the pentose substrate in the photorespiration process. Both reactions occur simultaneously and in competition at the same active site. The protein is Ribulose bisphosphate carboxylase large chain of Solanum bulbocastanum (Wild potato).